A 682-amino-acid chain; its full sequence is MSRKQLALFEPVLLVQALTDAVKKLSPRAQWRNPVMFVVWAGSVLTTLLTLAMVTGQIAGSALFTGIISLWLWFTVLFANFAEALAEGRSKAQANSLKGVKKTAFARRLRAPRHDAQADNVPAAELRKGDIVLVKAGDIIPCDGEVIEGGASVDESAITGESAPVIRESGGDFASVTGGTRILSDWLVIACSVNPGETFLDRMIAMVEGAQRRKTPNEIALTILLIALTIVFLLATATLWPFSAWGGNAVSVTVLVALLVCLIPTTIGGLLSAIGVAGMSRMLGANVIATSGRAVEAAGDVDVLLLDKTGTITLGNRQASDFIPARGVDERTLADAAQLASLADETPEGRSIVILAKQRFNLRERDVQSLHATFVPFTAQSRMSGINIDNRMIRKGSVDAIRRHVESNGGHFPADVEQNVENVARLGATPLVVVEGARVLGVIALKDIVKGGIKERFAQLRKMGIKTVMITGDNRLTAAAIAAEAGVDDFLAEATPEAKLALIRQYQAEGRLVAMTGDGTNDAPALAQADVAVAMNSGTQAAKEAGNMVDLDSNPTKLIEVVHIGKQMLMTRGSLTTFSIANDVAKYFAIIPAAFAATYPQLNALNVMGLHSPNSAILSAVIFNALIIIFLIPLALKGVSYKPLSASAMLRRNLWIYGLGGLLVPFIGIKVIDVLLTLLGLA.

The next 4 helical transmembrane spans lie at 34 to 54, 58 to 78, 219 to 239, and 254 to 274; these read PVMF…LAMV, IAGS…TVLF, IALT…TATL, and VLVA…LSAI. The 4-aspartylphosphate intermediate role is filled by Asp307. Residues Asp344, Glu348, 377–384, and Lys395 each bind ATP; that span reads FTAQSRMS. Residues Asp518 and Asp522 each coordinate Mg(2+). The next 3 membrane-spanning stretches (helical) occupy residues 588 to 608, 616 to 636, and 662 to 682; these read FAII…LNVM, AILS…PLAL, and LLVP…LGLA.

Belongs to the cation transport ATPase (P-type) (TC 3.A.3) family. Type IA subfamily. As to quaternary structure, the system is composed of three essential subunits: KdpA, KdpB and KdpC.

The protein resides in the cell inner membrane. It carries out the reaction K(+)(out) + ATP + H2O = K(+)(in) + ADP + phosphate + H(+). In terms of biological role, part of the high-affinity ATP-driven potassium transport (or Kdp) system, which catalyzes the hydrolysis of ATP coupled with the electrogenic transport of potassium into the cytoplasm. This subunit is responsible for energy coupling to the transport system and for the release of the potassium ions to the cytoplasm. The polypeptide is Potassium-transporting ATPase ATP-binding subunit (Salmonella dublin (strain CT_02021853)).